Consider the following 299-residue polypeptide: Probable lipid kinase YegS (299 aa).

The region spanning 2-133 is the DAGKc domain; the sequence is AEFPASLLIL…IDMAQVNKQT (132 aa). Residues Thr-40, 66-72, and Thr-95 each bind ATP; that span reads GDGTINE. Mg(2+) is bound by residues Leu-215, Asp-218, and Leu-220. Glu-271 functions as the Proton acceptor in the catalytic mechanism.

This sequence belongs to the diacylglycerol/lipid kinase family. YegS lipid kinase subfamily. Requires Mg(2+) as cofactor. Ca(2+) serves as cofactor.

Its subcellular location is the cytoplasm. Its function is as follows. Probably phosphorylates lipids; the in vivo substrate is unknown. The sequence is that of Probable lipid kinase YegS from Escherichia coli O9:H4 (strain HS).